The primary structure comprises 233 residues: Chaperone protein MrkB (233 aa).

The signal sequence occupies residues 1-18 (MKRIALFFCFIFSFAAHA).

This sequence belongs to the periplasmic pilus chaperone family.

Its subcellular location is the periplasm. Functionally, mediates assembly of pili by forming soluble multimeric complexes with pili subunits as an intermediate step in the assembly process. This protein is involved in type 3 pili assembly. In Klebsiella pneumoniae, this protein is Chaperone protein MrkB (mrkB).